The primary structure comprises 585 residues: Arginine--tRNA ligase (585 aa).

The short motif at 131–141 (ANPTGPMHVGH) is the 'HIGH' region element.

It belongs to the class-I aminoacyl-tRNA synthetase family. Monomer.

It localises to the cytoplasm. The catalysed reaction is tRNA(Arg) + L-arginine + ATP = L-arginyl-tRNA(Arg) + AMP + diphosphate. The chain is Arginine--tRNA ligase from Sinorhizobium medicae (strain WSM419) (Ensifer medicae).